Reading from the N-terminus, the 125-residue chain is Actin, alpha skeletal muscle (125 aa).

Belongs to the actin family. In terms of assembly, polymerization of globular actin (G-actin) leads to a structural filament (F-actin) in the form of a two-stranded helix. Each actin can bind to 4 others. In terms of processing, methylated at His-75 by SETD3.

It is found in the cytoplasm. It localises to the cytoskeleton. Its function is as follows. Actins are highly conserved proteins that are involved in various types of cell motility and are ubiquitously expressed in all eukaryotic cells. The sequence is that of Actin, alpha skeletal muscle from Pleurodeles waltl (Iberian ribbed newt).